The sequence spans 350 residues: Galactokinase (350 aa).

Residue 14–17 participates in substrate binding; the sequence is EHTD. ATP contacts are provided by residues S46 and 96–102; that span reads GAGLSSS. Mg(2+)-binding residues include S102 and E134. The active-site Proton acceptor is the D146. Y196 provides a ligand contact to substrate.

The protein belongs to the GHMP kinase family. GalK subfamily.

Its subcellular location is the cytoplasm. It catalyses the reaction alpha-D-galactose + ATP = alpha-D-galactose 1-phosphate + ADP + H(+). It functions in the pathway carbohydrate metabolism; galactose metabolism. Catalyzes the transfer of the gamma-phosphate of ATP to D-galactose to form alpha-D-galactose-1-phosphate (Gal-1-P). The sequence is that of Galactokinase from Thermotoga neapolitana (strain ATCC 49049 / DSM 4359 / NBRC 107923 / NS-E).